A 270-amino-acid polypeptide reads, in one-letter code: MSEALANMPGDDYFRQPPVFDTYAEHRAYLKFRHAVALRHFARLGFDQDGLAGLITVADPEHADTYWANPLAHPFSTITPADLIRVDGDSAETVEGQRRVNIAAFNIHAEIHRARPDVQAVIHLHTVYGRAFSAFARKLPPLTQDACPFFEDHEVFDDFTGLVLAKDDGRRIAKQLRGHKAILLKNHGLVTVGETLDAAAWWFTLLDTCCHVQLLADAAGKPEEIPAEVARLTGRQLGSHLLGWNSYQPLHEAALARDPDLATMEPALPS.

The protein belongs to the aldolase class II family.

It functions in the pathway antibiotic biosynthesis; novobiocin biosynthesis. In terms of biological role, may mediate the 2 consecutive oxidative decarboxylation steps in the biosynthesis of the prenylated hydroxybenzoic acid moiety of novobiocin, an aminocoumarin family antibiotic that targets bacterial DNA gyrases. The chain is Decarboxylase NovR (novR) from Streptomyces niveus (Streptomyces spheroides).